The chain runs to 290 residues: MAAAVVGVSLRRGVPARFLRAGLRPVRGLEAVHGICRGAQTAAAATSRIKKFSIYRWDPDKPGDKPRMQTYEVDLNKCGPMVLDALIKIKNELDSTLTFRRSCREGICGSCAMNIAGGNTLACTKKIDPDLSKTTKIYPLPHMYVVKDLVPDLSNFYAQYKSIEPYLKKKDESKQGKEQYLQSIEDRQKLDGLYECILCACCSTSCPSYWWNGDKYLGPAVLMQAYRWMIDSRDDYTEERLAQLQDPFSLYRCHTIMNCTRTCPKGLNPGKAIAEIKKMMATYKEKAAAA.

Residues Met-1–Gly-38 constitute a mitochondrion transit peptide. Residues Lys-50–Met-143 form the 2Fe-2S ferredoxin-type domain. 4 residues coordinate [2Fe-2S] cluster: Cys-103, Cys-108, Cys-111, and Cys-123. Positions Asp-186–Tyr-216 constitute a 4Fe-4S ferredoxin-type domain. [4Fe-4S] cluster is bound by residues Cys-196, Cys-199, and Cys-202. A [3Fe-4S] cluster-binding site is contributed by Cys-206. Trp-211 contacts a ubiquinone. 2 residues coordinate [3Fe-4S] cluster: Cys-253 and Cys-259. Cys-263 contacts [4Fe-4S] cluster.

The protein belongs to the succinate dehydrogenase/fumarate reductase iron-sulfur protein family. Component of complex II composed of four subunits: the flavoprotein (FP) SDHA, iron-sulfur protein (IP) SDHB, and a cytochrome b560 composed of SDHC and SDHD. It depends on [2Fe-2S] cluster as a cofactor. The cofactor is [3Fe-4S] cluster. [4Fe-4S] cluster is required as a cofactor.

The protein localises to the mitochondrion inner membrane. The catalysed reaction is a quinone + succinate = fumarate + a quinol. It catalyses the reaction (R)-malate + a quinone = enol-oxaloacetate + a quinol. The enzyme catalyses (S)-malate + a quinone = enol-oxaloacetate + a quinol. It functions in the pathway carbohydrate metabolism; tricarboxylic acid cycle; fumarate from succinate (eukaryal route): step 1/1. With respect to regulation, enol-oxaloacetate inhibits the succinate dehydrogenase activity. Functionally, iron-sulfur protein (IP) subunit of the succinate dehydrogenase complex (mitochondrial respiratory chain complex II), responsible for transferring electrons from succinate to ubiquinone (coenzyme Q). SDH also oxidizes malate to the non-canonical enol form of oxaloacetate, enol-oxaloacetate. Enol-oxaloacetate, which is a potent inhibitor of the succinate dehydrogenase activity, is further isomerized into keto-oxaloacetate. This Gallus gallus (Chicken) protein is Succinate dehydrogenase [ubiquinone] iron-sulfur subunit, mitochondrial (SDHB).